The following is a 66-amino-acid chain: Large ribosomal subunit protein bL33c (66 aa).

Belongs to the bacterial ribosomal protein bL33 family.

It localises to the plastid. The protein localises to the chloroplast. This Calycanthus floridus var. glaucus (Eastern sweetshrub) protein is Large ribosomal subunit protein bL33c.